We begin with the raw amino-acid sequence, 91 residues long: Alpha-defensin 31 (91 aa).

Residues 1–19 (MKKLVLLFALVLLAFQVQA) form the signal peptide. Positions 20 to 65 (DSIQNTDEETKTEEQQGEEDQAVSVSFGDPQGSGLQDAALGWGRRC) are excised as a propeptide. Positions 22-55 (IQNTDEETKTEEQQGEEDQAVSVSFGDPQGSGLQ) are disordered. 6 tandem repeats follow at residues 65–67 (CPR), 68–70 (CPP), 71–73 (CPR), 77–79 (CPR), 80–82 (CPT), and 83–85 (CPR). Positions 65–85 (CPRCPPCPRCSWCPRCPTCPR) are 6 X 3 AA tandem repeats of C-P-X.

The protein belongs to the alpha-defensin family. Paneth cells of the small bowel.

It localises to the secreted. Functionally, apparent precursor of a secreted, cationic, proline- and cysteine-rich peptide that contains Cys-Pro-Xaa repeats. Unlike cryptdin, the proposed mature peptide region lacks the structural motif characteristic of defensins. It may have microbicidal activities. This Mus musculus (Mouse) protein is Alpha-defensin 31.